A 132-amino-acid polypeptide reads, in one-letter code: Small ribosomal subunit protein uS8 (132 aa).

Belongs to the universal ribosomal protein uS8 family. In terms of assembly, part of the 30S ribosomal subunit. Contacts proteins S5 and S12.

Its function is as follows. One of the primary rRNA binding proteins, it binds directly to 16S rRNA central domain where it helps coordinate assembly of the platform of the 30S subunit. In Leuconostoc citreum (strain KM20), this protein is Small ribosomal subunit protein uS8.